An 876-amino-acid polypeptide reads, in one-letter code: Alanine--tRNA ligase (876 aa).

K74 bears the N6-acetyllysine mark. Residues H564, H568, C666, and H670 each coordinate Zn(2+).

Belongs to the class-II aminoacyl-tRNA synthetase family. As to quaternary structure, homotetramer. The cofactor is Zn(2+).

The protein resides in the cytoplasm. It carries out the reaction tRNA(Ala) + L-alanine + ATP = L-alanyl-tRNA(Ala) + AMP + diphosphate. In terms of biological role, catalyzes the attachment of alanine to tRNA(Ala) in a two-step reaction: alanine is first activated by ATP to form Ala-AMP and then transferred to the acceptor end of tRNA(Ala). Also edits incorrectly charged Ser-tRNA(Ala) and Gly-tRNA(Ala) via its editing domain. This is Alanine--tRNA ligase from Shigella boydii serotype 4 (strain Sb227).